A 235-amino-acid chain; its full sequence is Segregation and condensation protein A (235 aa).

Belongs to the ScpA family. As to quaternary structure, component of a cohesin-like complex composed of ScpA, ScpB and the Smc homodimer, in which ScpA and ScpB bind to the head domain of Smc. The presence of the three proteins is required for the association of the complex with DNA.

It is found in the cytoplasm. Its function is as follows. Participates in chromosomal partition during cell division. May act via the formation of a condensin-like complex containing Smc and ScpB that pull DNA away from mid-cell into both cell halves. The chain is Segregation and condensation protein A from Streptococcus uberis (strain ATCC BAA-854 / 0140J).